Reading from the N-terminus, the 305-residue chain is Glutaminase (305 aa).

Substrate contacts are provided by Ser61, Asn113, Glu158, Asn165, Tyr189, Tyr241, and Val259.

The protein belongs to the glutaminase family. In terms of assembly, homotetramer.

It carries out the reaction L-glutamine + H2O = L-glutamate + NH4(+). The protein is Glutaminase of Clostridium botulinum (strain Loch Maree / Type A3).